Here is a 376-residue protein sequence, read N- to C-terminus: DNA replication and repair protein RecF (376 aa).

30–37 (GHNGVGKT) provides a ligand contact to ATP.

This sequence belongs to the RecF family.

It is found in the cytoplasm. In terms of biological role, the RecF protein is involved in DNA metabolism; it is required for DNA replication and normal SOS inducibility. RecF binds preferentially to single-stranded, linear DNA. It also seems to bind ATP. This Salinispora arenicola (strain CNS-205) protein is DNA replication and repair protein RecF.